Here is a 156-residue protein sequence, read N- to C-terminus: MKQNVFEVLMYLFENYLYNDEEPGDRDSLESELHEAGFSAMEIRKAFEWLDALADSRVLPAAPSGKSSIRLFGEPELARLDTETRGFILYLEQVGILTAESRELVLDRILALDDHEVDLDTVKWVILMVLFNRPGEEEAYNWMENLMFDVPTHLVH.

The protein belongs to the Smg family.

The sequence is that of Protein Smg homolog from Halorhodospira halophila (strain DSM 244 / SL1) (Ectothiorhodospira halophila (strain DSM 244 / SL1)).